Consider the following 159-residue polypeptide: Ribosomal RNA large subunit methyltransferase H (159 aa).

S-adenosyl-L-methionine-binding positions include leucine 76, glycine 107, and 126–131; that span reads LSKLTM.

It belongs to the RNA methyltransferase RlmH family. Homodimer.

It localises to the cytoplasm. It carries out the reaction pseudouridine(1915) in 23S rRNA + S-adenosyl-L-methionine = N(3)-methylpseudouridine(1915) in 23S rRNA + S-adenosyl-L-homocysteine + H(+). Its function is as follows. Specifically methylates the pseudouridine at position 1915 (m3Psi1915) in 23S rRNA. This chain is Ribosomal RNA large subunit methyltransferase H, found in Acinetobacter baumannii (strain AB307-0294).